The primary structure comprises 194 residues: Fe/S biogenesis protein NfuA (194 aa).

The [4Fe-4S] cluster site is built by Cys152 and Cys155.

It belongs to the NfuA family. In terms of assembly, homodimer. The cofactor is [4Fe-4S] cluster.

In terms of biological role, involved in iron-sulfur cluster biogenesis. Binds a 4Fe-4S cluster, can transfer this cluster to apoproteins, and thereby intervenes in the maturation of Fe/S proteins. Could also act as a scaffold/chaperone for damaged Fe/S proteins. This chain is Fe/S biogenesis protein NfuA, found in Pseudomonas fluorescens (strain SBW25).